A 92-amino-acid polypeptide reads, in one-letter code: Small ribosomal subunit protein uS19 (92 aa).

The segment at Glu-73–Lys-92 is disordered. Residues Phe-80–Lys-92 are compositionally biased toward basic residues.

The protein belongs to the universal ribosomal protein uS19 family.

In terms of biological role, protein S19 forms a complex with S13 that binds strongly to the 16S ribosomal RNA. The protein is Small ribosomal subunit protein uS19 of Flavobacterium psychrophilum (strain ATCC 49511 / DSM 21280 / CIP 103535 / JIP02/86).